An 86-amino-acid chain; its full sequence is Acyl carrier protein (86 aa).

Residues 10-85 form the Carrier domain; that stretch reads DKIEQKVIEM…DVIKYIKERQ (76 aa). Ser45 is modified (O-(pantetheine 4'-phosphoryl)serine).

This sequence belongs to the acyl carrier protein (ACP) family. Post-translationally, 4'-phosphopantetheine is transferred from CoA to a specific serine of apo-ACP by AcpS. This modification is essential for activity because fatty acids are bound in thioester linkage to the sulfhydryl of the prosthetic group.

It is found in the cytoplasm. It functions in the pathway lipid metabolism; fatty acid biosynthesis. Carrier of the growing fatty acid chain in fatty acid biosynthesis. The polypeptide is Acyl carrier protein (Rickettsia africae (strain ESF-5)).